A 307-amino-acid chain; its full sequence is tRNA(Met) cytidine acetate ligase (307 aa).

ATP is bound by residues 12 to 25 (VVEY…HIYQ), Gly106, Asn163, and Arg188.

Belongs to the TmcAL family.

The protein resides in the cytoplasm. The enzyme catalyses cytidine(34) in elongator tRNA(Met) + acetate + ATP = N(4)-acetylcytidine(34) in elongator tRNA(Met) + AMP + diphosphate. Catalyzes the formation of N(4)-acetylcytidine (ac(4)C) at the wobble position of elongator tRNA(Met), using acetate and ATP as substrates. First activates an acetate ion to form acetyladenylate (Ac-AMP) and then transfers the acetyl group to tRNA to form ac(4)C34. The polypeptide is tRNA(Met) cytidine acetate ligase (Mycoplasmopsis synoviae (strain 53) (Mycoplasma synoviae)).